The sequence spans 138 residues: Ribulose bisphosphate carboxylase small subunit (138 aa).

The protein belongs to the RuBisCO small chain family. As to quaternary structure, heterohexadecamer of 8 large and 8 small subunits.

Its subcellular location is the plastid. The protein localises to the chloroplast. Functionally, ruBisCO catalyzes two reactions: the carboxylation of D-ribulose 1,5-bisphosphate, the primary event in carbon dioxide fixation, as well as the oxidative fragmentation of the pentose substrate in the photorespiration process. Both reactions occur simultaneously and in competition at the same active site. Although the small subunit is not catalytic it is essential for maximal activity. In Pyropia yezoensis (Susabi-nori), this protein is Ribulose bisphosphate carboxylase small subunit.